We begin with the raw amino-acid sequence, 509 residues long: ATP synthase subunit alpha (509 aa).

Gly-169 to Thr-176 serves as a coordination point for ATP.

Belongs to the ATPase alpha/beta chains family. In terms of assembly, F-type ATPases have 2 components, CF(1) - the catalytic core - and CF(0) - the membrane proton channel. CF(1) has five subunits: alpha(3), beta(3), gamma(1), delta(1), epsilon(1). CF(0) has three main subunits: a(1), b(2) and c(9-12). The alpha and beta chains form an alternating ring which encloses part of the gamma chain. CF(1) is attached to CF(0) by a central stalk formed by the gamma and epsilon chains, while a peripheral stalk is formed by the delta and b chains.

It is found in the cell inner membrane. The enzyme catalyses ATP + H2O + 4 H(+)(in) = ADP + phosphate + 5 H(+)(out). Produces ATP from ADP in the presence of a proton gradient across the membrane. The alpha chain is a regulatory subunit. The protein is ATP synthase subunit alpha of Brucella canis (strain ATCC 23365 / NCTC 10854 / RM-666).